Consider the following 263-residue polypeptide: Proteasome subunit alpha type-1 (263 aa).

N-acetylmethionine is present on M1. S110 is subject to Phosphoserine; alternate. O-linked (GlcNAc) serine; alternate glycosylation is present at S110. A Glycyl lysine isopeptide (Lys-Gly) (interchain with G-Cter in ubiquitin) cross-link involves residue K115. S177 is subject to Phosphoserine. A Glycyl lysine isopeptide (Lys-Gly) (interchain with G-Cter in ubiquitin) cross-link involves residue K208. Residues 232 to 263 (FLEGLEERPQRKAQPAQPADEPAEKADEPMEH) form a disordered region. Basic and acidic residues predominate over residues 253–263 (PAEKADEPMEH).

The protein belongs to the peptidase T1A family. The 26S proteasome consists of a 20S proteasome core and two 19S regulatory subunits. The 20S proteasome core is a barrel-shaped complex made of 28 subunits that are arranged in four stacked rings. The two outer rings are each formed by seven alpha subunits, and the two inner rings are formed by seven beta subunits. The proteolytic activity is exerted by three beta-subunits PSMB5, PSMB6 and PSMB7. Interacts with NOTCH3. Interacts with ZFAND1.

The protein resides in the cytoplasm. Its subcellular location is the nucleus. Component of the 20S core proteasome complex involved in the proteolytic degradation of most intracellular proteins. This complex plays numerous essential roles within the cell by associating with different regulatory particles. Associated with two 19S regulatory particles, forms the 26S proteasome and thus participates in the ATP-dependent degradation of ubiquitinated proteins. The 26S proteasome plays a key role in the maintenance of protein homeostasis by removing misfolded or damaged proteins that could impair cellular functions, and by removing proteins whose functions are no longer required. Associated with the PA200 or PA28, the 20S proteasome mediates ubiquitin-independent protein degradation. This type of proteolysis is required in several pathways including spermatogenesis (20S-PA200 complex) or generation of a subset of MHC class I-presented antigenic peptides (20S-PA28 complex). This Macaca fascicularis (Crab-eating macaque) protein is Proteasome subunit alpha type-1 (PSMA1).